Reading from the N-terminus, the 448-residue chain is N-succinylarginine dihydrolase (448 aa).

Substrate contacts are provided by residues 19–28 (GGLSYGNVAS), asparagine 110, and 137–138 (HR). Residue glutamate 174 is part of the active site. Arginine 214 provides a ligand contact to substrate. The active site involves histidine 250. Residues aspartate 252 and asparagine 365 each coordinate substrate. Cysteine 371 serves as the catalytic Nucleophile.

Belongs to the succinylarginine dihydrolase family. Homodimer.

The enzyme catalyses N(2)-succinyl-L-arginine + 2 H2O + 2 H(+) = N(2)-succinyl-L-ornithine + 2 NH4(+) + CO2. The protein operates within amino-acid degradation; L-arginine degradation via AST pathway; L-glutamate and succinate from L-arginine: step 2/5. Catalyzes the hydrolysis of N(2)-succinylarginine into N(2)-succinylornithine, ammonia and CO(2). In Pseudomonas syringae pv. syringae (strain B728a), this protein is N-succinylarginine dihydrolase.